A 247-amino-acid polypeptide reads, in one-letter code: Carboxy-S-adenosyl-L-methionine synthase (247 aa).

S-adenosyl-L-methionine-binding positions include Tyr-40, 65 to 67 (GAS), 90 to 91 (DN), 122 to 123 (DI), Asn-137, and Arg-204.

Belongs to the class I-like SAM-binding methyltransferase superfamily. Cx-SAM synthase family. In terms of assembly, homodimer.

The enzyme catalyses prephenate + S-adenosyl-L-methionine = carboxy-S-adenosyl-L-methionine + 3-phenylpyruvate + H2O. Catalyzes the conversion of S-adenosyl-L-methionine (SAM) to carboxy-S-adenosyl-L-methionine (Cx-SAM). The chain is Carboxy-S-adenosyl-L-methionine synthase from Ectopseudomonas mendocina (strain ymp) (Pseudomonas mendocina).